A 444-amino-acid chain; its full sequence is Spermidine/putrescine import ATP-binding protein PotA (444 aa).

Residues 11 to 332 (ISLVDVDKEF…PVNKWVANFI (322 aa)) enclose the ABC transporter domain. Residue 43 to 50 (GPSGSGKT) participates in ATP binding. Positions 111–201 (RIKKKAEEIP…ESFKKKYLTR (91 aa)) are insert.

Belongs to the ABC transporter superfamily. Spermidine/putrescine importer (TC 3.A.1.11.1) family. The complex is composed of two ATP-binding proteins (PotA), two transmembrane proteins (PotB and PotC) and a solute-binding protein (PotD).

The protein resides in the cell membrane. The enzyme catalyses ATP + H2O + polyamine-[polyamine-binding protein]Side 1 = ADP + phosphate + polyamineSide 2 + [polyamine-binding protein]Side 1.. Part of the ABC transporter complex PotABCD involved in spermidine/putrescine import. Responsible for energy coupling to the transport system. This chain is Spermidine/putrescine import ATP-binding protein PotA, found in Mesomycoplasma hyopneumoniae (strain J / ATCC 25934 / NCTC 10110) (Mycoplasma hyopneumoniae).